Consider the following 329-residue polypeptide: Mitochondrial nuclease (329 aa).

The active-site Proton acceptor is the His-138. Asn-170 is a binding site for Mg(2+).

Belongs to the DNA/RNA non-specific endonuclease family. Homodimer. It depends on Mn(2+) as a cofactor. Mg(2+) serves as cofactor.

Its subcellular location is the mitochondrion inner membrane. Functionally, this enzyme has both RNase and DNase activity. The chain is Mitochondrial nuclease (NUC1) from Saccharomyces cerevisiae (strain ATCC 204508 / S288c) (Baker's yeast).